The sequence spans 278 residues: Large ribosomal subunit protein uL2 (278 aa).

Positions 222 to 278 (GVVMNPIDHPHGGGEGRTSGGRHPVTPWGKPTKGKKTRSNKSTDKFILISRHKRKKK) are disordered.

The protein belongs to the universal ribosomal protein uL2 family. As to quaternary structure, part of the 50S ribosomal subunit. Forms a bridge to the 30S subunit in the 70S ribosome.

One of the primary rRNA binding proteins. Required for association of the 30S and 50S subunits to form the 70S ribosome, for tRNA binding and peptide bond formation. It has been suggested to have peptidyltransferase activity; this is somewhat controversial. Makes several contacts with the 16S rRNA in the 70S ribosome. This chain is Large ribosomal subunit protein uL2, found in Rhodopseudomonas palustris (strain ATCC BAA-98 / CGA009).